Reading from the N-terminus, the 466-residue chain is Putative D-3-phosphoglycerate dehydrogenase (466 aa).

Basic and acidic residues predominate over residues 1 to 15 (MDIKGGRRGNVEDSL). The tract at residues 1 to 26 (MDIKGGRRGNVEDSLNKLSLSPPDNN) is disordered. Over residues 16 to 26 (NKLSLSPPDNN) the composition is skewed to polar residues. A Phosphoserine modification is found at serine 87. Residues 205–206 (HI) and aspartate 225 contribute to the NAD(+) site. Serine 258 is subject to Phosphoserine. NAD(+) contacts are provided by residues 282–284 (ASR) and aspartate 308. Arginine 284 is a catalytic residue. Glutamate 313 is an active-site residue. Catalysis depends on histidine 344, which acts as the Proton donor. 344-347 (HIGG) is a binding site for NAD(+). Positions 396–466 (RVLFVHRNVP…PCKINTRLLY (71 aa)) constitute an ACT domain.

This sequence belongs to the D-isomer specific 2-hydroxyacid dehydrogenase family.

The enzyme catalyses (2R)-3-phosphoglycerate + NAD(+) = 3-phosphooxypyruvate + NADH + H(+). It carries out the reaction (R)-2-hydroxyglutarate + NAD(+) = 2-oxoglutarate + NADH + H(+). Its pathway is amino-acid biosynthesis; L-serine biosynthesis; L-serine from 3-phospho-D-glycerate: step 1/3. Catalyzes the reversible oxidation of 3-phospho-D-glycerate to 3-phosphonooxypyruvate, the first step of the phosphorylated L-serine biosynthesis pathway. Also catalyzes the reversible oxidation of 2-hydroxyglutarate to 2-oxoglutarate. In Schizosaccharomyces pombe (strain 972 / ATCC 24843) (Fission yeast), this protein is Putative D-3-phosphoglycerate dehydrogenase.